The chain runs to 336 residues: Glyceraldehyde-3-phosphate dehydrogenase, chromosomal (336 aa).

NAD(+)-binding positions include 12–13, aspartate 37, arginine 81, and serine 123; that span reads RI. D-glyceraldehyde 3-phosphate contacts are provided by residues 154–156 and threonine 185; that span reads SCT. Cysteine 155 acts as the Nucleophile in catalysis. Asparagine 186 lines the NAD(+) pocket. D-glyceraldehyde 3-phosphate-binding positions include arginine 200, 213–214, and arginine 236; that span reads TG. Residue asparagine 317 participates in NAD(+) binding.

This sequence belongs to the glyceraldehyde-3-phosphate dehydrogenase family. In terms of assembly, homotetramer.

It catalyses the reaction D-glyceraldehyde 3-phosphate + phosphate + NAD(+) = (2R)-3-phospho-glyceroyl phosphate + NADH + H(+). Its pathway is carbohydrate biosynthesis; Calvin cycle. Functionally, could be involved in carbon fixation as a component of the Calvin cycle. Catalyzes the oxidative phosphorylation of glyceraldehyde 3-phosphate (G3P) to 1,3-bisphosphoglycerate (BPG) using the cofactor NAD. The first reaction step involves the formation of a hemiacetal intermediate between G3P and a cysteine residue, and this hemiacetal intermediate is then oxidized to a thioester, with concomitant reduction of NAD to NADH. The reduced NADH is then exchanged with the second NAD, and the thioester is attacked by a nucleophilic inorganic phosphate to produce BPG. In Cupriavidus necator (strain ATCC 17699 / DSM 428 / KCTC 22496 / NCIMB 10442 / H16 / Stanier 337) (Ralstonia eutropha), this protein is Glyceraldehyde-3-phosphate dehydrogenase, chromosomal (cbbGC).